We begin with the raw amino-acid sequence, 41 residues long: Maticotoxin A (41 aa).

Cystine bridges form between Cys-3–Cys-22 and Cys-15–Cys-39.

This sequence belongs to the three-finger toxin family. Short-chain subfamily. As to expression, expressed by the venom gland.

It is found in the secreted. This chain is Maticotoxin A, found in Calliophis bivirgatus (Blue Malaysian coral snake).